Reading from the N-terminus, the 375-residue chain is EP300-interacting inhibitor of differentiation 3 (375 aa).

Positions 23-51 (AWQHLVKQEEEEAVKKEEKEEGEDEEEEG) form a coiled coil. The tract at residues 30-68 (QEEEEAVKKEEKEEGEDEEEEGSDSSSDDPNPEPPCMHP) is disordered. Residues 42–60 (EEGEDEEEEGSDSSSDDPN) are compositionally biased toward acidic residues.

This sequence belongs to the NSE4 family. Component of the SMC5-SMC6 complex which consists at least of SMC5, SMC6, NSMCE2, NSMCE1, NSMCE4A or EID3 and NSMCE3; EID3 seems to be a testis-specific subunit. NSMCE1, NSMCE4A or EID3 and NSMCE3 probably form a subcomplex that bridges the head domains of the SMC5:SMC6 heterodimer. Homodimer, and heterodimer with EID2. Interacts with the C-terminal region of CREBBP.

It localises to the nucleus. The protein localises to the cytoplasm. Its subcellular location is the chromosome. The protein resides in the telomere. Its function is as follows. Tissue-specific component of the SMC5-SMC6 complex, a complex involved in repair of DNA double-strand breaks by homologous recombination. The complex may promote sister chromatid homologous recombination by recruiting the SMC1-SMC3 cohesin complex to double-strand breaks. The complex is required for telomere maintenance via recombination and mediates sumoylation of shelterin complex (telosome) components. In terms of biological role, acts as a repressor of nuclear receptor-dependent transcription possibly by interfering with CREBBP-dependent coactivation. May function as a coinhibitor of other CREBBP/EP300-dependent transcription factors. This Mus musculus (Mouse) protein is EP300-interacting inhibitor of differentiation 3.